We begin with the raw amino-acid sequence, 95 residues long: Protein TusB (95 aa).

This sequence belongs to the DsrH/TusB family. Heterohexamer, formed by a dimer of trimers. The hexameric TusBCD complex contains 2 copies each of TusB, TusC and TusD. The TusBCD complex interacts with TusE.

The protein localises to the cytoplasm. In terms of biological role, part of a sulfur-relay system required for 2-thiolation of 5-methylaminomethyl-2-thiouridine (mnm(5)s(2)U) at tRNA wobble positions. The protein is Protein TusB of Serratia proteamaculans (strain 568).